The primary structure comprises 319 residues: MASPKKKLQGLVAATITPMTEHGEINFSVIGQYVDYLVEVQGVKNIFVNGTTGEGLSLSISERCQVAEEWVTKGRNKLDQIVIHVGALSLKESQELAQHAAKIGADGIAVIAPFFLKPWNKDNLINFLKEVAAAAPALPFYYYHIPALTGVKIRAEELLDGIQDKIPTFQGLKFSDTDLLDFGQCVDQNHQRQFAFLFGVDEQLLSALVMGATGAVGSTYNYLGRKTNQMLEAFERKDFSSALNHQFCIQRFINFVVKLGFGVSQTKAIMTLVSGIPMGPPRLPLQKASREFTDNAKAKLKSLDVLSFTDLKDGNLEAC.

Residues Thr-51 and Thr-52 each contribute to the aceneuramate site. The Proton donor role is filled by Tyr-143. Lys-173 acts as the Schiff-base intermediate with substrate in catalysis. Positions 175, 199, 201, 202, and 218 each coordinate aceneuramate.

Belongs to the DapA family. NanA subfamily. Homotetramer.

It is found in the cytoplasm. The enzyme catalyses aceneuramate = aldehydo-N-acetyl-D-mannosamine + pyruvate. Its pathway is amino-sugar metabolism; N-acetylneuraminate degradation. Functionally, catalyzes the cleavage of N-acetylneuraminic acid (sialic acid) to form pyruvate and N-acetylmannosamine via a Schiff base intermediate. It prevents sialic acids from being recycled and returning to the cell surface. Involved in the N-glycolylneuraminic acid (Neu5Gc) degradation pathway. This is N-acetylneuraminate lyase from Sus scrofa (Pig).